A 504-amino-acid chain; its full sequence is Dolichol kinase sec59 (504 aa).

The Cytoplasmic portion of the chain corresponds to 1–55 (MYIMSKKCYDTSEKIDREQECVEVNYQHRNFESILEIFSVLFIPFLCNSGKKFLQ). The helical transmembrane segment at 56-76 (ISNASFFLPACFYLLGSSSII) threads the bilayer. A topological domain (lumenal) is located at residue glutamine 77. Residues 78–98 (LYEPLLWLSSFPFCILYVGFG) form a helical membrane-spanning segment. Residues 99 to 157 (ENSVLYHEMYTVCLYNALLSLTQRWKWLSIVLDGLGNSSVNLKLHETVILAFLEITQNS) are Cytoplasmic-facing. A helical membrane pass occupies residues 158–178 (FTFIEGILICTGLTGLCFATF). Over 179–187 (SYEVSPVVS) the chain is Lumenal. The chain crosses the membrane as a helical span at residues 188–208 (VLSGVLLISLPTLILLNLCIL). The Cytoplasmic segment spans residues 209–215 (KLAAKLH). The helical transmembrane segment at 216 to 236 (LSALFTTCLIYFFSALLVFLV) threads the bilayer. Residues 237–263 (SRSWVAGQLGQAPEVWLFNQIFSHRNS) are Lumenal-facing. The helical transmembrane segment at 264–284 (LTRIKIIIWWIICLGCFIFIL) threads the bilayer. Topologically, residues 285-325 (LRSNRNNPLGKYFTTEDEVLNFRRKTYHALVVFLFLPVCCL) are cytoplasmic. A helical transmembrane segment spans residues 326–347 (DPHFLHLSFSGVLFIFLFVEGI). The Lumenal segment spans residues 348–373 (RILRLKPFGKMIHEFLWEYTDNRDHK). Residues 374 to 394 (GPLIISHIYLLIGCAIPIWLS) traverse the membrane as a helical segment. At 395–403 (NALKGPVAS) the chain is on the cytoplasmic side. The chain crosses the membrane as a helical span at residues 404-424 (VELLVGVLCLGCGDSMASIIG). Topologically, residues 425–440 (KRFGKHRISKTNKSIE) are lumenal. Residues 441–461 (GVFAFSISVFLVLHLTQAFHV) traverse the membrane as a helical segment. Cysteine 462 is a topological domain (cytoplasmic). Residues 463–483 (PSVTFWKTLFMSLCTAILEGV) form a helical membrane-spanning segment. Residues 484–504 (STENDNLILPMYMWVLYQALD) are Lumenal-facing.

It belongs to the polyprenol kinase family.

The protein resides in the endoplasmic reticulum membrane. The catalysed reaction is a di-trans,poly-cis-dolichol + CTP = a di-trans,poly-cis-dolichyl phosphate + CDP + H(+). It functions in the pathway protein modification; protein glycosylation. Catalyzes CTP-mediated phosphorylation of dolichol, the terminal step in de novo dolichyl monophosphate (Dol-P) biosynthesis. Dol-P is a lipid carrier essential for the synthesis of N-linked and O-linked oligosaccharides and for GPI anchors. The sequence is that of Dolichol kinase sec59 from Schizosaccharomyces pombe (strain 972 / ATCC 24843) (Fission yeast).